The primary structure comprises 1159 residues: WASH complex subunit 5 (1159 aa).

The protein belongs to the strumpellin family. In terms of assembly, component of the WASH core complex also described as WASH regulatory complex (SHRC) composed of WASH (WASHC1, WASH2P or WASH3P), WASHC2 (WASHC2A or WASHC2C), WASHC3, WASHC4 and WASHC5. The WASH core complex associates via WASHC2 with the F-actin-capping protein dimer (formed by CAPZA1, CAPZA2 or CAPZA3 and CAPZB) in a transient or substoichiometric manner which was initially described as WASH complex. Interacts with VCP, PI4K2A.

The protein resides in the cytoplasm. It is found in the cytosol. The protein localises to the endoplasmic reticulum. It localises to the early endosome. Its function is as follows. Acts as a component of the WASH core complex that functions as a nucleation-promoting factor (NPF) at the surface of endosomes, where it recruits and activates the Arp2/3 complex to induce actin polymerization, playing a key role in the fission of tubules that serve as transport intermediates during endosome sorting. May be involved in axonal outgrowth. Involved in cellular localization of ADRB2. Involved in cellular trafficking of BLOC-1 complex cargos such as ATP7A and VAMP7. Involved in cytokinesis and following polar body extrusion during oocyte meiotic maturation. The protein is WASH complex subunit 5 of Mus musculus (Mouse).